Reading from the N-terminus, the 99-residue chain is Putative pterin-4-alpha-carbinolamine dehydratase (99 aa).

This sequence belongs to the pterin-4-alpha-carbinolamine dehydratase family.

It catalyses the reaction (4aS,6R)-4a-hydroxy-L-erythro-5,6,7,8-tetrahydrobiopterin = (6R)-L-erythro-6,7-dihydrobiopterin + H2O. The sequence is that of Putative pterin-4-alpha-carbinolamine dehydratase from Synechococcus sp. (strain CC9311).